The sequence spans 131 residues: Hydrogenase maturation factor HypA (131 aa).

His2 is a binding site for Ni(2+). Cys74, Cys77, Cys91, and Cys94 together coordinate Zn(2+).

Belongs to the HypA/HybF family.

In terms of biological role, involved in the maturation of [NiFe] hydrogenases. Required for nickel insertion into the metal center of the hydrogenase. The protein is Hydrogenase maturation factor HypA of Streptomyces avermitilis (strain ATCC 31267 / DSM 46492 / JCM 5070 / NBRC 14893 / NCIMB 12804 / NRRL 8165 / MA-4680).